A 217-amino-acid chain; its full sequence is ATP phosphoribosyltransferase (217 aa).

It belongs to the ATP phosphoribosyltransferase family. Short subfamily. As to quaternary structure, heteromultimer composed of HisG and HisZ subunits.

It is found in the cytoplasm. It carries out the reaction 1-(5-phospho-beta-D-ribosyl)-ATP + diphosphate = 5-phospho-alpha-D-ribose 1-diphosphate + ATP. Its pathway is amino-acid biosynthesis; L-histidine biosynthesis; L-histidine from 5-phospho-alpha-D-ribose 1-diphosphate: step 1/9. Its function is as follows. Catalyzes the condensation of ATP and 5-phosphoribose 1-diphosphate to form N'-(5'-phosphoribosyl)-ATP (PR-ATP). Has a crucial role in the pathway because the rate of histidine biosynthesis seems to be controlled primarily by regulation of HisG enzymatic activity. This Burkholderia orbicola (strain MC0-3) protein is ATP phosphoribosyltransferase.